Consider the following 96-residue polypeptide: Integration host factor subunit beta (96 aa).

This sequence belongs to the bacterial histone-like protein family. In terms of assembly, heterodimer of an alpha and a beta chain.

In terms of biological role, this protein is one of the two subunits of integration host factor, a specific DNA-binding protein that functions in genetic recombination as well as in transcriptional and translational control. The chain is Integration host factor subunit beta from Dichelobacter nodosus (strain VCS1703A).